The primary structure comprises 114 residues: MEFFGQLDQMLGSSRENNLWYQKALYFMRRSGIIAKEKVFPKVSANYSPLEGLEFFRIDTLNANLLYERLIVSVLALPRRKKEINLTVKMQKESKRCNGSYPPLISESNAKTTQ.

This is an uncharacterized protein from Archaeoglobus fulgidus (strain ATCC 49558 / DSM 4304 / JCM 9628 / NBRC 100126 / VC-16).